The sequence spans 168 residues: Heat shock protein beta-9 (168 aa).

Over residues 1–12 (MQRVGSSFSTGQ) the composition is skewed to polar residues. Disordered stretches follow at residues 1–25 (MQRV…SRCP), 83–104 (TGQR…EQSV), and 129–168 (LWLR…VKNP). A sHSP domain is found at 38–151 (LPVRLLRDEV…EAQTGQSQKP (114 aa)). Over residues 86-104 (RQHESNDPSRGRYRMEQSV) the composition is skewed to basic and acidic residues. Residues 158–168 (SSLQNESVKNP) are compositionally biased toward polar residues.

This sequence belongs to the small heat shock protein (HSP20) family. Testis specific.

It localises to the cytoplasm. Its subcellular location is the nucleus. This chain is Heat shock protein beta-9 (Hspb9), found in Mus musculus (Mouse).